A 300-amino-acid polypeptide reads, in one-letter code: MTTSASSSDYSNTEDCISECKSNQSASVGYYPSENTFSYEDVVSPEEAASVESSAHFLPPVQGSWGTESLRRLFRKRDQMKHDPEQFCKLSITLAWDIDVGSDRADSLANLDLNSHSQWMNKWPEDRTKLTPYKLDNLVRKLETFLGKEKGGQHDSHVLPESTQKEDVFLNSSPPPHTAQVSHHEHDACQDLPKHKALENEDICQAPENPPRLLKDEVVEISQADGSSLETSSMSSPRPEDASHLHRTSCMNFQWVFHWLRTQVSSRWRREHPSQAPVSWHQKAMRRMHSFRGNRIQPQE.

Disordered regions lie at residues 167–186 (DVFL…HHEH) and 224–244 (ADGS…DASH). Over residues 224 to 236 (ADGSSLETSSMSS) the composition is skewed to polar residues.

This is an uncharacterized protein from Rattus norvegicus (Rat).